We begin with the raw amino-acid sequence, 396 residues long: 1-deoxy-D-xylulose 5-phosphate reductoisomerase (396 aa).

Residues Thr-10, Gly-11, Ser-12, Ile-13, and Asn-123 each contribute to the NADPH site. 1-deoxy-D-xylulose 5-phosphate is bound at residue Lys-124. Glu-125 is a binding site for NADPH. Residue Asp-149 participates in Mn(2+) binding. The 1-deoxy-D-xylulose 5-phosphate site is built by Ser-150, Glu-151, Ser-185, and His-208. Glu-151 provides a ligand contact to Mn(2+). Position 214 (Gly-214) interacts with NADPH. Residues Ser-221, Asn-226, Lys-227, and Glu-230 each coordinate 1-deoxy-D-xylulose 5-phosphate. Residue Glu-230 coordinates Mn(2+).

It belongs to the DXR family. It depends on Mg(2+) as a cofactor. The cofactor is Mn(2+).

It catalyses the reaction 2-C-methyl-D-erythritol 4-phosphate + NADP(+) = 1-deoxy-D-xylulose 5-phosphate + NADPH + H(+). The protein operates within isoprenoid biosynthesis; isopentenyl diphosphate biosynthesis via DXP pathway; isopentenyl diphosphate from 1-deoxy-D-xylulose 5-phosphate: step 1/6. In terms of biological role, catalyzes the NADPH-dependent rearrangement and reduction of 1-deoxy-D-xylulose-5-phosphate (DXP) to 2-C-methyl-D-erythritol 4-phosphate (MEP). This is 1-deoxy-D-xylulose 5-phosphate reductoisomerase from Shewanella sp. (strain ANA-3).